A 321-amino-acid chain; its full sequence is Acetyl-coenzyme A carboxylase carboxyl transferase subunit alpha (321 aa).

A CoA carboxyltransferase C-terminal domain is found at 32-293; sequence DISEEIARLQ…KRVLQDQLKE (262 aa).

It belongs to the AccA family. In terms of assembly, acetyl-CoA carboxylase is a heterohexamer composed of biotin carboxyl carrier protein (AccB), biotin carboxylase (AccC) and two subunits each of ACCase subunit alpha (AccA) and ACCase subunit beta (AccD).

Its subcellular location is the cytoplasm. The enzyme catalyses N(6)-carboxybiotinyl-L-lysyl-[protein] + acetyl-CoA = N(6)-biotinyl-L-lysyl-[protein] + malonyl-CoA. The protein operates within lipid metabolism; malonyl-CoA biosynthesis; malonyl-CoA from acetyl-CoA: step 1/1. Its function is as follows. Component of the acetyl coenzyme A carboxylase (ACC) complex. First, biotin carboxylase catalyzes the carboxylation of biotin on its carrier protein (BCCP) and then the CO(2) group is transferred by the carboxyltransferase to acetyl-CoA to form malonyl-CoA. This Chromobacterium violaceum (strain ATCC 12472 / DSM 30191 / JCM 1249 / CCUG 213 / NBRC 12614 / NCIMB 9131 / NCTC 9757 / MK) protein is Acetyl-coenzyme A carboxylase carboxyl transferase subunit alpha.